The chain runs to 529 residues: Phosphoenolpyruvate carboxykinase (ATP) (529 aa).

Substrate-binding residues include Arg-55, Tyr-190, and Lys-196. Residues Lys-196, His-215, and 231–239 (GLSGTGKTT) each bind ATP. 2 residues coordinate Mn(2+): Lys-196 and His-215. Asp-252 serves as a coordination point for Mn(2+). 3 residues coordinate ATP: Glu-280, Arg-317, and Thr-442. Residue Arg-317 coordinates substrate.

This sequence belongs to the phosphoenolpyruvate carboxykinase (ATP) family. Mn(2+) serves as cofactor.

It is found in the cytoplasm. It carries out the reaction oxaloacetate + ATP = phosphoenolpyruvate + ADP + CO2. The protein operates within carbohydrate biosynthesis; gluconeogenesis. Functionally, involved in the gluconeogenesis. Catalyzes the conversion of oxaloacetate (OAA) to phosphoenolpyruvate (PEP) through direct phosphoryl transfer between the nucleoside triphosphate and OAA. This chain is Phosphoenolpyruvate carboxykinase (ATP), found in Deinococcus geothermalis (strain DSM 11300 / CIP 105573 / AG-3a).